The chain runs to 466 residues: MTFDSSPIAAIATAPGRGGIGVVRISGKDLSSVMRAVCGADKGSSLQARHATYLDFVNSDGSVIDQGLAIYFKAPHSYTGEDVLELQGHGGPVVLQMLLTRCLEAGADIGLRMAEPGEFTHRAFLNDKLDLAQAEGVIDLIEASTEAAAKSATQSLSGAFSKTIQELVDKITNLRMLVEATLDFPEEEIDFLEKSDARGQLTNIREALQRVFSQAAQGALLRDGLNIVLAGQPNVGKSSLLNALAGSDVAIVTPIAGTTRDKVIETIQIEGIPVNVIDTAGIRDAADAGDEVERIGIERTWAAVQTADVIVHMLDASRGPTRADEQITERFPANVPVMRVWNKIDLSGHRPAIDRMPDATHIYLSATGLLGMDLLRTELLHLVGWQQTGESLYLARERHLVALKSAHSHLEMAAQHAAHDNEATDPALDLFAEELRLAQERLSSITGEFTSDDLLGVIFSRFCIGK.

(6S)-5-formyl-5,6,7,8-tetrahydrofolate contacts are provided by R24, E85, and K128. A TrmE-type G domain is found at 224–384; the sequence is GLNIVLAGQP…LRTELLHLVG (161 aa). A K(+)-binding site is contributed by N234. Residues 234-239, 253-259, and 278-281 contribute to the GTP site; these read NVGKSS, TPIAGTT, and DTAG. Position 238 (S238) interacts with Mg(2+). Residues T253, I255, and T258 each contribute to the K(+) site. Residue T259 coordinates Mg(2+). K466 provides a ligand contact to (6S)-5-formyl-5,6,7,8-tetrahydrofolate.

The protein belongs to the TRAFAC class TrmE-Era-EngA-EngB-Septin-like GTPase superfamily. TrmE GTPase family. Homodimer. Heterotetramer of two MnmE and two MnmG subunits. K(+) is required as a cofactor.

The protein localises to the cytoplasm. Functionally, exhibits a very high intrinsic GTPase hydrolysis rate. Involved in the addition of a carboxymethylaminomethyl (cmnm) group at the wobble position (U34) of certain tRNAs, forming tRNA-cmnm(5)s(2)U34. The chain is tRNA modification GTPase MnmE from Herminiimonas arsenicoxydans.